Reading from the N-terminus, the 250-residue chain is Acetylglutamate kinase (250 aa).

Residues 41–42, R63, and N156 each bind substrate; that span reads GG.

The protein belongs to the acetylglutamate kinase family. ArgB subfamily.

The protein resides in the cytoplasm. The catalysed reaction is N-acetyl-L-glutamate + ATP = N-acetyl-L-glutamyl 5-phosphate + ADP. The protein operates within amino-acid biosynthesis; L-arginine biosynthesis; N(2)-acetyl-L-ornithine from L-glutamate: step 2/4. Its function is as follows. Catalyzes the ATP-dependent phosphorylation of N-acetyl-L-glutamate. This is Acetylglutamate kinase from Listeria monocytogenes serotype 4b (strain F2365).